A 377-amino-acid polypeptide reads, in one-letter code: Protein-arginine rhamnosyltransferase (377 aa).

Residue Tyr15 coordinates dTDP-beta-L-rhamnose. Residue Asp17 is the Proton acceptor of the active site. Residues Tyr193, Gln255, and 271-275 (RGEDS) each bind dTDP-beta-L-rhamnose. The active site involves Glu273.

Belongs to the glycosyltransferase 104 family.

It catalyses the reaction dTDP-beta-L-rhamnose + L-arginyl-[protein] = N(omega)-(alpha-L-rhamnosyl)-L-arginyl-[protein] + dTDP + H(+). Its function is as follows. Protein-arginine rhamnosyltransferase that catalyzes the transfer of a single rhamnose to elongation factor P (EF-P) on 'Lys-32', a modification required for EF-P-dependent rescue of polyproline stalled ribosomes. In Pseudomonas putida (strain ATCC 47054 / DSM 6125 / CFBP 8728 / NCIMB 11950 / KT2440), this protein is Protein-arginine rhamnosyltransferase.